A 204-amino-acid chain; its full sequence is MTDTIKIGVGGPVGAGKHELIEKIVKRLAKDMSIGVITNDIYTKEDEKILVNSGVLPEDRIIGVETGGCPHTAIREDASMNFAAIDELKERNDDIELIFIESGGDNLAATFSPELVDFSIYIIDVAQGEKIPRKGGQGMIKSDFFVINKTDLAPYVGASLERMAEDTKVFRGNRPFTFTNLKTDEGLDEVIEWIEQYVFLKGLA.

11–18 (GPVGAGKH) is a GTP binding site.

It belongs to the SIMIBI class G3E GTPase family. UreG subfamily. As to quaternary structure, homodimer. UreD, UreF and UreG form a complex that acts as a GTP-hydrolysis-dependent molecular chaperone, activating the urease apoprotein by helping to assemble the nickel containing metallocenter of UreC. The UreE protein probably delivers the nickel.

The protein resides in the cytoplasm. Functionally, facilitates the functional incorporation of the urease nickel metallocenter. This process requires GTP hydrolysis, probably effectuated by UreG. The sequence is that of Urease accessory protein UreG from Staphylococcus xylosus.